A 634-amino-acid chain; its full sequence is Serine/threonine kinase NLK (634 aa).

One can recognise a Protein kinase domain in the interval 240–531 (SQPDRPIGYG…VEEALQHRYL (292 aa)). Residues 246-254 (IGYGAFGVV) and lysine 269 contribute to the ATP site. Aspartate 366 acts as the Proton acceptor in catalysis.

It belongs to the protein kinase superfamily. CMGC Ser/Thr protein kinase family. MAP kinase subfamily. Component of the beta-catenin-lit-1 complex (also called the lit-1/wrm-1 complex or the wrm-1/lit-1 kinase complex) at least composed of lit-1 and wrm-1. Interacts with wrm-1 (via N-terminus); the interaction is direct and activates lit-1 kinase activity which leads to the phosphorylation of pop-1. This promotes pop-1 interaction with par-5 and translocation of pop-1 from the nucleus to the cytoplasm. Interacts with pop-1 (when phosphorylated on 'Ser-118' and 'Ser-127'); the interaction is dependent on the beta-catenin-lit-1 complex. Mg(2+) serves as cofactor. Expressed in the pharynx and seam and vulval cells.

The protein localises to the cytoplasm. Its subcellular location is the cell cortex. The protein resides in the nucleus. The catalysed reaction is L-seryl-[protein] + ATP = O-phospho-L-seryl-[protein] + ADP + H(+). It carries out the reaction L-threonyl-[protein] + ATP = O-phospho-L-threonyl-[protein] + ADP + H(+). Its function is as follows. Has a role in the Wnt signaling pathway controlling the asymmetry of cell divisions during embryogenesis. Operates in the AB and EMS cell lineages influencing cell specification. Required for body wall muscle development, endoderm development, pop-1 asymmetry and T-cell division asymmetry. Component of the beta-catenin-lit-1 complex which promotes the phosphorylation, down-regulation and subcellular relocation of pop-1. Regulates plp-1 nuclear localization in embryos. Plays a role in male tail tip morphogenesis. The polypeptide is Serine/threonine kinase NLK (Caenorhabditis elegans).